We begin with the raw amino-acid sequence, 119 residues long: Large ribosomal subunit protein bL20c (119 aa).

It belongs to the bacterial ribosomal protein bL20 family.

It localises to the plastid. The protein resides in the chloroplast. In terms of biological role, binds directly to 23S ribosomal RNA and is necessary for the in vitro assembly process of the 50S ribosomal subunit. It is not involved in the protein synthesizing functions of that subunit. This is Large ribosomal subunit protein bL20c from Lolium perenne (Perennial ryegrass).